The following is a 534-amino-acid chain: UDP-glucuronosyltransferase 1A3 (534 aa).

The signal sequence occupies residues 1 to 28 (MATGLQVPLPWLATGLLLLLSVQPWAES). N-linked (GlcNAc...) asparagine glycosylation is found at N119, N142, N296, and N348. Residues 492–508 (VIGFLLAVVLTVAFITF) traverse the membrane as a helical segment.

This sequence belongs to the UDP-glycosyltransferase family. Homodimer. Homooligomer. Interacts with UGT1A1, UGT1A4, UGT1A6, UGT1A7, UGT1A8, UGT1A9 and UGT1A10 to form heterodimers. Isoform 1 interacts with isoform 2/i2 suggesting that oligomerization is involved in negative regulation of transferase activity by isoform 2. Isoform 1 also interacts with respective i2 isoforms of UGT1A1, UGT1A4, UGT1A6, UGT1A7, UGT1A8, UGT1A9 and UGT1A10. In terms of tissue distribution, expressed in liver, kidney, colon, esophagus and small intestine. Expressed in liver, kidney and colon. Not expressed in esophagus and small intestine.

The protein localises to the endoplasmic reticulum membrane. The catalysed reaction is glucuronate acceptor + UDP-alpha-D-glucuronate = acceptor beta-D-glucuronoside + UDP + H(+). It catalyses the reaction 17beta-estradiol + UDP-alpha-D-glucuronate = 17beta-estradiol 3-O-(beta-D-glucuronate) + UDP + H(+). It carries out the reaction 17beta-estradiol + UDP-alpha-D-glucuronate = 17beta-estradiol 17-O-(beta-D-glucuronate) + UDP + H(+). The enzyme catalyses 17alpha-estradiol + UDP-alpha-D-glucuronate = 17alpha-estradiol 3-O-(beta-D-glucuronate) + UDP + H(+). The catalysed reaction is estrone + UDP-alpha-D-glucuronate = estrone 3-O-(beta-D-glucuronate) + UDP + H(+). It catalyses the reaction chenodeoxycholate + UDP-alpha-D-glucuronate = chenodeoxycholoyl-24-O-(beta-D-glucuronate) + UDP. It carries out the reaction deoxycholate + UDP-alpha-D-glucuronate = deoxycholoyl-24-O-(beta-D-glucuronate) + UDP. The enzyme catalyses lithocholate + UDP-alpha-D-glucuronate = lithocholoyl-24-O-(beta-D-glucuronate) + UDP. The catalysed reaction is hyodeoxycholate + UDP-alpha-D-glucuronate = hyodeoxycholoyl-24-O-(beta-D-glucuronate) + UDP. It catalyses the reaction hyocholate + UDP-alpha-D-glucuronate = hyocholoyl-24-O-(beta-D-glucuronate) + UDP. It carries out the reaction calcidiol + UDP-alpha-D-glucuronate = calcidiol 25-O-(beta-D-glucuronide) + UDP + H(+). The enzyme catalyses (E)-ferulate + UDP-alpha-D-glucuronate = (E)-4-O-(beta-D-glucuronosyl)-ferulate + UDP + H(+). The catalysed reaction is (E)-ferulate + UDP-alpha-D-glucuronate = (E)-ferulic acid beta-D-glucuronate ester + UDP. It catalyses the reaction losartan + UDP-alpha-D-glucuronate = losartan-2-N-beta-D-glucuronide + UDP. It carries out the reaction candesartan + UDP-alpha-D-glucuronate = candesartan-2-N-beta-D-glucuronide + UDP. The enzyme catalyses zolasartan + UDP-alpha-D-glucuronate = zolarsartan-2-N-beta-D-glucuronide + UDP. Its function is as follows. UDP-glucuronosyltransferase (UGT) that catalyzes phase II biotransformation reactions in which lipophilic substrates are conjugated with glucuronic acid to increase the metabolite's water solubility, thereby facilitating excretion into either the urine or bile. Essential for the elimination and detoxification of drugs, xenobiotics and endogenous compounds. Catalyzes the glucuronidation of endogenous estrogen hormones such as estradiol and estrone. Contributes to bile acid (BA) detoxification by catalyzing the glucuronidation of BA substrates, which are natural detergents for dietary lipids absorption. Involved in the glucuronidation of calcidiol, which is the major circulating form of vitamin D3, essential for the regulation of calcium and phosphate homeostasis. Involved in the glucuronidation of the phytochemical ferulic acid at the phenolic or the carboxylic acid group. Involved in the glucuronidation of the AGTR1 angiotensin receptor antagonists losartan, candesartan and zolarsartan, which can inhibit the effect of angiotensin II. In terms of biological role, lacks UDP-glucuronosyltransferase (UGT) activity but acts as a negative regulator of isoform 1. The polypeptide is UDP-glucuronosyltransferase 1A3 (Homo sapiens (Human)).